Consider the following 52-residue polypeptide: uncharacterized protein (52 aa).

Residues 1–52 (MSLRPCLTPSSMQYSDIYIPTPTPTHHTHTPTPHPHPHTHTHTHHNPNPTLF) form a disordered region. Basic residues predominate over residues 35-45 (PHPHTHTHTHH).

This is an uncharacterized protein from Saccharomyces cerevisiae (strain ATCC 204508 / S288c) (Baker's yeast).